The chain runs to 403 residues: S-adenosylmethionine synthase (403 aa).

H17 lines the ATP pocket. D19 contacts Mg(2+). E45 is a binding site for K(+). L-methionine-binding residues include E58 and Q104. A flexible loop region spans residues 104-114 (QSPDIAQGVDT). ATP contacts are provided by residues 179–181 (DGK), 250–251 (KF), D259, 265–266 (RK), A282, and K286. D259 serves as a coordination point for L-methionine. Residue K290 participates in L-methionine binding.

The protein belongs to the AdoMet synthase family. As to quaternary structure, homotetramer; dimer of dimers. Mg(2+) is required as a cofactor. K(+) serves as cofactor.

The protein resides in the cytoplasm. The enzyme catalyses L-methionine + ATP + H2O = S-adenosyl-L-methionine + phosphate + diphosphate. Its pathway is amino-acid biosynthesis; S-adenosyl-L-methionine biosynthesis; S-adenosyl-L-methionine from L-methionine: step 1/1. In terms of biological role, catalyzes the formation of S-adenosylmethionine (AdoMet) from methionine and ATP. The overall synthetic reaction is composed of two sequential steps, AdoMet formation and the subsequent tripolyphosphate hydrolysis which occurs prior to release of AdoMet from the enzyme. This Mycobacterium bovis (strain ATCC BAA-935 / AF2122/97) protein is S-adenosylmethionine synthase.